A 453-amino-acid chain; its full sequence is DNA repair protein RadA (453 aa).

The C4-type zinc-finger motif lies at 11–28 (CNQCGATAPKWLGQCPGC). 93 to 100 (GDPGIGKS) provides a ligand contact to ATP. Residues 250 to 254 (KNRFG) carry the RadA KNRFG motif motif. The tract at residues 349-453 (DVFLSITGGL…TIKDAIRLLL (105 aa)) is lon-protease-like.

This sequence belongs to the RecA family. RadA subfamily.

Functionally, DNA-dependent ATPase involved in processing of recombination intermediates, plays a role in repairing DNA breaks. Stimulates the branch migration of RecA-mediated strand transfer reactions, allowing the 3' invading strand to extend heteroduplex DNA faster. Binds ssDNA in the presence of ADP but not other nucleotides, has ATPase activity that is stimulated by ssDNA and various branched DNA structures, but inhibited by SSB. Does not have RecA's homology-searching function. In Chlamydia pneumoniae (Chlamydophila pneumoniae), this protein is DNA repair protein RadA.